We begin with the raw amino-acid sequence, 903 residues long: Dual serine/threonine and tyrosine protein kinase (903 aa).

Positions 382-414 (ANRKQEEMKEMIVETLESMKEQLLEDAANLEFT) form a coiled coil. One can recognise a Protein kinase domain in the interval 627-881 (PKLGRELGRG…PLLGIVQPSL (255 aa)). Residues 633-641 (LGRGQYGVV) and Lys-656 each bind ATP. Asp-752 (proton acceptor) is an active-site residue.

The protein belongs to the protein kinase superfamily. Ser/Thr protein kinase family.

The protein localises to the cytoplasm. It localises to the cell membrane. It is found in the apical cell membrane. The protein resides in the basolateral cell membrane. Its subcellular location is the cell junction. The catalysed reaction is L-seryl-[protein] + ATP = O-phospho-L-seryl-[protein] + ADP + H(+). It carries out the reaction L-threonyl-[protein] + ATP = O-phospho-L-threonyl-[protein] + ADP + H(+). It catalyses the reaction L-tyrosyl-[protein] + ATP = O-phospho-L-tyrosyl-[protein] + ADP + H(+). May act as a positive regulator of ERK phosphorylation downstream of fibroblast growth factor-receptor activation. May induce both caspase-dependent apoptosis and caspase-independent cell death. May play a role in the embryonic development. This is Dual serine/threonine and tyrosine protein kinase from Pimephales promelas (Fathead minnow).